The chain runs to 680 residues: E3 ubiquitin-protein ligase Midline-1 (680 aa).

The RING-type zinc-finger motif lies at 10-60; that stretch reads CPICLELFEDPLLLPCAHSLCFNCAHRILVSHCATNEPVESINAFQCPTCR. Phosphoserine occurs at positions 92 and 96. 2 B box-type zinc fingers span residues 116–165 and 172–212; these read KVLC…IEPI and GLMC…VAAL. Zn(2+)-binding residues include cysteine 119, cysteine 122, cysteine 134, cysteine 137, cysteine 142, cysteine 145, histidine 150, histidine 159, cysteine 175, histidine 178, cysteine 198, and histidine 204. Residues 205 to 264 are a coiled coil; that stretch reads RDHQVAALSERYDKLKQNLESNLTNLIKRNTELETLLAKLIQTCQHVEVNASRQEAKLTE. The COS domain maps to 320 to 379; the sequence is LKENDHARFLQTAKNITERVSMATASSQVLIPEINLNDTFDTFALDFSREKKLLECLDYL. The Fibronectin type-III domain occupies 384-494; the sequence is PPAIREELCT…RSSEPGKLKT (111 aa). Residues 484–498 are compositionally biased toward polar residues; sequence SRSSEPGKLKTNSQP. 2 disordered regions span residues 484 to 503 and 516 to 535; these read SRSS…RLDP and NLTV…PERF. Residues 495–672 form the B30.2/SPRY domain; that stretch reads NSQPFRLDPK…IVTGLPIPDH (178 aa). Over residues 516-533 the composition is skewed to basic and acidic residues; it reads NLTVERDESSSKKSHAPE. Serine 524 carries the post-translational modification Phosphoserine.

Belongs to the TRIM/RBCC family. In terms of assembly, homodimer or heterodimer with MID2. Interacts with IGBP1. In terms of processing, phosphorylated. In terms of tissue distribution, ubiquitously expressed in fetus and adult. At 9 dpc-10.5 dpc, highest expression found in frontonasal processes, branchial arches and CNS. From 12.5 dpc to 16.5 dpc, high levels found in rostral part of CNS. At 14.5 dpc, begins to be highly expressed in kidney and lung. At 16.5 dpc, highly expressed in the mucosa of the hindgut and cutaneous region of the stomach.

It is found in the cytoplasm. Its subcellular location is the cytoskeleton. The enzyme catalyses S-ubiquitinyl-[E2 ubiquitin-conjugating enzyme]-L-cysteine + [acceptor protein]-L-lysine = [E2 ubiquitin-conjugating enzyme]-L-cysteine + N(6)-ubiquitinyl-[acceptor protein]-L-lysine.. Its function is as follows. Has E3 ubiquitin ligase activity towards IGBP1, promoting its monoubiquitination, which results in deprotection of the catalytic subunit of protein phosphatase PP2A, and its subsequent degradation by polyubiquitination. This chain is E3 ubiquitin-protein ligase Midline-1 (Mid1), found in Mus musculus (Mouse).